A 266-amino-acid chain; its full sequence is uncharacterized protein (266 aa).

Belongs to the chlamydial CPn_0087/CT_309/TC_0583 family.

This is an uncharacterized protein from Chlamydia pneumoniae (Chlamydophila pneumoniae).